The following is a 225-amino-acid chain: Thymidylate kinase (225 aa).

Residue 15 to 22 (GGEGSGKS) coordinates ATP.

Belongs to the thymidylate kinase family.

It catalyses the reaction dTMP + ATP = dTDP + ADP. Its function is as follows. Phosphorylation of dTMP to form dTDP in both de novo and salvage pathways of dTTP synthesis. The protein is Thymidylate kinase of Protochlamydia amoebophila (strain UWE25).